A 31-amino-acid chain; its full sequence is Cytochrome b6-f complex subunit 6 (31 aa).

A helical membrane pass occupies residues 4–24 (ITSYFGFLLVVLTITSALFIG).

This sequence belongs to the PetL family. In terms of assembly, the 4 large subunits of the cytochrome b6-f complex are cytochrome b6, subunit IV (17 kDa polypeptide, PetD), cytochrome f and the Rieske protein, while the 4 small subunits are PetG, PetL, PetM and PetN. The complex functions as a dimer.

The protein resides in the plastid. Its subcellular location is the chloroplast thylakoid membrane. Its function is as follows. Component of the cytochrome b6-f complex, which mediates electron transfer between photosystem II (PSII) and photosystem I (PSI), cyclic electron flow around PSI, and state transitions. PetL is important for photoautotrophic growth as well as for electron transfer efficiency and stability of the cytochrome b6-f complex. The protein is Cytochrome b6-f complex subunit 6 of Jasminum nudiflorum (Winter jasmine).